The following is a 264-amino-acid chain: Glutamate racemase (264 aa).

Substrate is bound by residues 10-11 (DS) and 42-43 (YG). Cys73 acts as the Proton donor/acceptor in catalysis. A substrate-binding site is contributed by 74–75 (NT). Cys183 acts as the Proton donor/acceptor in catalysis. 184–185 (TH) lines the substrate pocket.

The protein belongs to the aspartate/glutamate racemases family.

It catalyses the reaction L-glutamate = D-glutamate. It participates in cell wall biogenesis; peptidoglycan biosynthesis. Functionally, provides the (R)-glutamate required for cell wall biosynthesis. This Streptococcus uberis (strain ATCC BAA-854 / 0140J) protein is Glutamate racemase.